The following is a 399-amino-acid chain: Argininosuccinate synthase (399 aa).

8 to 16 (AYSGGLDTT) serves as a coordination point for ATP. Tyr-87 provides a ligand contact to L-citrulline. Gly-117 provides a ligand contact to ATP. Residues Thr-119, Asn-123, and Asp-124 each coordinate L-aspartate. Asn-123 serves as a coordination point for L-citrulline. L-citrulline is bound by residues Arg-127, Ser-175, Glu-259, and Tyr-271.

It belongs to the argininosuccinate synthase family. Type 1 subfamily. As to quaternary structure, homotetramer.

The protein resides in the cytoplasm. The enzyme catalyses L-citrulline + L-aspartate + ATP = 2-(N(omega)-L-arginino)succinate + AMP + diphosphate + H(+). The protein operates within amino-acid biosynthesis; L-arginine biosynthesis; L-arginine from L-ornithine and carbamoyl phosphate: step 2/3. This is Argininosuccinate synthase from Corynebacterium urealyticum (strain ATCC 43042 / DSM 7109).